A 234-amino-acid polypeptide reads, in one-letter code: uncharacterized protein (234 aa).

6 helical membrane-spanning segments follow: residues 5–23 (LFYISAIFVPEAIWLLWSF), 38–60 (IPTAYVTAFISGDALLAVIGFWV), 73–92 (AHIQWIAGYFAFFFVLAHGW), 127–149 (AITLYAMALPTIVPMIAGGYIWL), 170–192 (GVAIYLLGVFVAFLMAACATVIS), and 197–217 (TQAGMLVGVIVTITVAYALAF).

It localises to the cell membrane. This is an uncharacterized protein from Archaeoglobus fulgidus (strain ATCC 49558 / DSM 4304 / JCM 9628 / NBRC 100126 / VC-16).